We begin with the raw amino-acid sequence, 467 residues long: UDP-N-acetylmuramate--L-alanine ligase (467 aa).

Residue 112–118 participates in ATP binding; it reads GTHGKTT.

It belongs to the MurCDEF family.

It localises to the cytoplasm. It catalyses the reaction UDP-N-acetyl-alpha-D-muramate + L-alanine + ATP = UDP-N-acetyl-alpha-D-muramoyl-L-alanine + ADP + phosphate + H(+). Its pathway is cell wall biogenesis; peptidoglycan biosynthesis. In terms of biological role, cell wall formation. The sequence is that of UDP-N-acetylmuramate--L-alanine ligase from Paraburkholderia phytofirmans (strain DSM 17436 / LMG 22146 / PsJN) (Burkholderia phytofirmans).